Reading from the N-terminus, the 371-residue chain is Glyco-Gag protein (371 aa).

Over 1-51 (MSGASSGTAIGAHLFGVSPEYRVLIGDEGAGPSKSLSEVSFSVWYRSRAAR) the chain is Cytoplasmic. Residues 52–72 (LVILCLVASFLVPCLTFLIAE) traverse the membrane as a helical segment. Topologically, residues 73–371 (AVMGQTVTTP…NVIDETFPLT (299 aa)) are extracellular. N-linked (GlcNAc...) asparagine; by host glycosylation is present at asparagine 134. Disordered stretches follow at residues 171–281 (VRPF…NNRP) and 350–371 (VPGE…FPLT). Positions 174–193 (FLPPPKPPTPLPQPLSPQPS) are enriched in pro residues. Low complexity predominate over residues 194-203 (APLTSSLYPV). Pro residues-rich tracts occupy residues 204–220 (VPKP…PDPS) and 230–245 (EPPP…PSGP).

Glycosylated by host. Post-translationally, cleaved by host near the middle of the molecule, releasing the c-terminal half containing capsid and nucleoprotein domains op GAG.

The protein localises to the host cell membrane. Plays a role in viral particle release. Presumably acts by facilitating the fission of the virion bud at the cell surface. The polypeptide is Glyco-Gag protein (Feline sarcoma virus (strain Snyder-Theilen)).